Reading from the N-terminus, the 223-residue chain is N-terminal Xaa-Pro-Lys N-methyltransferase 1 (223 aa).

Met-1 is subject to N-acetylmethionine. Thr-2 carries the N-acetylthreonine; in N-terminal Xaa-Pro-Lys N-methyltransferase 1, N-terminally processed modification. S-adenosyl-L-methionine is bound by residues Gly-69, Arg-74, 91-93 (DVT), 119-120 (LQ), and Gln-135.

This sequence belongs to the methyltransferase superfamily. NTM1 family.

The protein resides in the nucleus. The enzyme catalyses N-terminal L-alanyl-L-prolyl-L-lysyl-[protein] + 3 S-adenosyl-L-methionine = N-terminal N,N,N-trimethyl-L-alanyl-L-prolyl-L-lysyl-[protein] + 3 S-adenosyl-L-homocysteine + 3 H(+). It catalyses the reaction N-terminal L-seryl-L-prolyl-L-lysyl-[protein] + 3 S-adenosyl-L-methionine = N-terminal N,N,N-trimethyl-L-seryl-L-prolyl-L-lysyl-[protein] + 3 S-adenosyl-L-homocysteine + 3 H(+). The catalysed reaction is N-terminal L-prolyl-L-prolyl-L-lysyl-[protein] + 2 S-adenosyl-L-methionine = N-terminal N,N-dimethyl-L-prolyl-L-prolyl-L-lysyl-[protein] + 2 S-adenosyl-L-homocysteine + 2 H(+). In terms of biological role, distributive alpha-N-methyltransferase that methylates the N-terminus of target proteins containing the N-terminal motif [Ala/Gly/Pro/Ser]-Pro-Lys when the initiator Met is cleaved. Specifically catalyzes mono-, di- or tri-methylation of the exposed alpha-amino group of the Ala, Gly or Ser residue in the [Ala/Gly/Ser]-Pro-Lys motif and mono- or di-methylation of Pro in the Pro-Pro-Lys motif. Some of the substrates may be primed by NTMT2-mediated monomethylation. Catalyzes the trimethylation of the N-terminal Gly in CENPA (after removal of Met-1). Responsible for the N-terminal methylation of KLHL31, MYL2, MYL3, RB1, RCC1, RPL23A and SET. Required during mitosis for normal bipolar spindle formation and chromosome segregation via its action on RCC1. The protein is N-terminal Xaa-Pro-Lys N-methyltransferase 1 (NTMT1) of Bos taurus (Bovine).